The following is a 518-amino-acid chain: Delta(14)-sterol reductase erg24B (518 aa).

A glycan (N-linked (GlcNAc...) asparagine) is linked at asparagine 36. 6 helical membrane-spanning segments follow: residues 110 to 130, 150 to 170, 182 to 202, 294 to 314, 321 to 341, and 355 to 375; these read VTMW…FLPG, AFLS…LYGT, YVQV…FVYL, IVLT…MEPA, VIMD…VPFL, and ELGL…YVIF. NADP(+) contacts are provided by residues lysine 382, arginine 386, leucine 409, tryptophan 414, and 421–422; that span reads NY. The helical transmembrane segment at 464 to 484 threads the bilayer; it reads SRGWGMIFTYFYMIYFGVLLL. Residues aspartate 490, 494 to 498, and tyrosine 505 each bind NADP(+); that span reads CKRKY.

It belongs to the ERG4/ERG24 family.

Its subcellular location is the endoplasmic reticulum membrane. It functions in the pathway steroid metabolism; ergosterol biosynthesis. Functionally, delta(14)-sterol reductase; part of the third module of ergosterol biosynthesis pathway that includes the late steps of the pathway. Catalyzes the reduction of the C14=C15 double bond within 4,4,24-trimethyl ergosta-8,14,24(28)-trienolto produce 4,4-dimethylfecosterol. The third module or late pathway involves the ergosterol synthesis itself through consecutive reactions that mainly occur in the endoplasmic reticulum (ER) membrane. Firstly, the squalene synthase erg9 catalyzes the condensation of 2 farnesyl pyrophosphate moieties to form squalene, which is the precursor of all steroids. Squalene synthase is crucial for balancing the incorporation of farnesyl diphosphate (FPP) into sterol and nonsterol isoprene synthesis. Secondly, squalene is converted into lanosterol by the consecutive action of the squalene epoxidase erg1 and the lanosterol synthase erg7. Then, the delta(24)-sterol C-methyltransferase erg6 methylates lanosterol at C-24 to produce eburicol. Eburicol is the substrate of the sterol 14-alpha demethylase encoded by cyp51A and cyp51B, to yield 4,4,24-trimethyl ergosta-8,14,24(28)-trienol. The C-14 reductase erg24 then reduces the C14=C15 double bond which leads to 4,4-dimethylfecosterol. A sequence of further demethylations at C-4, involving the C-4 demethylation complex containing the C-4 methylsterol oxidases erg25A or erg25B, the sterol-4-alpha-carboxylate 3-dehydrogenase erg26 and the 3-keto-steroid reductase erg27, leads to the production of fecosterol via 4-methylfecosterol. The C-8 sterol isomerase erg2 then catalyzes the reaction which results in unsaturation at C-7 in the B ring of sterols and thus converts fecosterol to episterol. The sterol-C5-desaturase erg3B then catalyzes the introduction of a C-5 double bond in the B ring to produce 5-dehydroepisterol. The 2 other sterol-C5-desaturases, erg3A and erg3C, seem to be less important in ergosterol biosynthesis. The C-22 sterol desaturase erg5 further converts 5-dehydroepisterol into ergosta-5,7,22,24(28)-tetraen-3beta-ol by forming the C-22(23) double bond in the sterol side chain. Finally, ergosta-5,7,22,24(28)-tetraen-3beta-ol is substrate of the C-24(28) sterol reductases erg4A and erg4B to produce ergosterol. Possible alternative sterol biosynthetic pathways might exist from fecosterol to ergosterol, depending on the activities of the erg3 isoforms. The chain is Delta(14)-sterol reductase erg24B from Aspergillus fumigatus (strain ATCC MYA-4609 / CBS 101355 / FGSC A1100 / Af293) (Neosartorya fumigata).